The following is a 273-amino-acid chain: LOB domain-containing protein 20 (273 aa).

Residues 1 to 15 (MADQQRGHNTSDSRR) are compositionally biased toward basic and acidic residues. The tract at residues 1–39 (MADQQRGHNTSDSRRKSLAGKRTSQQTPTSSLSSGGVSM) is disordered. Low complexity predominate over residues 23-39 (TSQQTPTSSLSSGGVSM). One can recognise an LOB domain in the interval 50–152 (SPCGACKFLR…AELSVVQSQL (103 aa)). Residues 221-248 (LEHSLQPMPPHQQRRGDYQHEDEEESGA) are disordered.

The protein belongs to the LOB domain-containing protein family. As to expression, expressed in roots and flowers.

This chain is LOB domain-containing protein 20 (LBD20), found in Arabidopsis thaliana (Mouse-ear cress).